The sequence spans 914 residues: NADH-quinone oxidoreductase subunit G (914 aa).

In terms of domain architecture, 2Fe-2S ferredoxin-type spans 1–83; that stretch reads MATIHVDGKE…GTFISIDDSE (83 aa). [2Fe-2S] cluster contacts are provided by Cys34, Cys45, Cys48, and Cys67. The 4Fe-4S His(Cys)3-ligated-type domain maps to 83-122; the sequence is EAKAFRESVVEWLMTNHPHDCPVCEEGGNCHLQDMTVMTG. 12 residues coordinate [4Fe-4S] cluster: His99, Cys103, Cys106, Cys112, Cys151, Cys154, Cys157, Cys201, Cys228, Cys231, Cys235, and Cys263. The 4Fe-4S Mo/W bis-MGD-type domain occupies 221 to 277; the sequence is MQFAPSICQQCSVGCNTSPGERYGELRRIENRYNGSVNHYFMCDRGRFGYGYVNLKD.

Belongs to the complex I 75 kDa subunit family. As to quaternary structure, composed of 13 different subunits. Subunits NuoCD, E, F, and G constitute the peripheral sector of the complex. Requires [2Fe-2S] cluster as cofactor. [4Fe-4S] cluster serves as cofactor.

The enzyme catalyses a quinone + NADH + 5 H(+)(in) = a quinol + NAD(+) + 4 H(+)(out). Functionally, NDH-1 shuttles electrons from NADH, via FMN and iron-sulfur (Fe-S) centers, to quinones in the respiratory chain. The immediate electron acceptor for the enzyme in this species is believed to be ubiquinone. Couples the redox reaction to proton translocation (for every two electrons transferred, four hydrogen ions are translocated across the cytoplasmic membrane), and thus conserves the redox energy in a proton gradient. The chain is NADH-quinone oxidoreductase subunit G (nuoG) from Yersinia pestis.